The primary structure comprises 161 residues: V-type proton ATPase 16 kDa proteolipid subunit c 2 (161 aa).

Residues 1–15 (MSYDLETAEHAAYAP) are Lumenal-facing. The helical transmembrane segment at 16–36 (FFGYMGAASAQIFTVLGAAYG) threads the bilayer. The Cytoplasmic portion of the chain corresponds to 37–58 (TAKSAVGICSMGVMRPELIMKS). Residues 59-79 (VIPVIMAGIIGIYGLVVAMVL) traverse the membrane as a helical segment. The Lumenal portion of the chain corresponds to 80 to 98 (KGKVQAASAGYDLNKGFAH). The helical transmembrane segment at 99–119 (LAAGLTCGLCGLGAGYAIGIV) threads the bilayer. Over 120-137 (GDAGVRGTAQQPRLFVGM) the chain is Cytoplasmic. Residues 138 to 158 (ILILIFSEVLGLYGMIVALIL) form a helical membrane-spanning segment. Residues 159 to 161 (GTS) are Lumenal-facing.

The protein belongs to the V-ATPase proteolipid subunit family. In terms of assembly, V-ATPase is a heteromultimeric enzyme made up of two complexes: the ATP-hydrolytic V1 complex and the proton translocation V0 complex. The V1 complex consists of three catalytic AB heterodimers that form a heterohexamer, three peripheral stalks each consisting of EG heterodimers, one central rotor including subunits D and F, and the regulatory subunits C and H. The proton translocation complex V0 consists of the proton transport subunit a, a ring of proteolipid subunits c9c'', rotary subunit d, subunits e and f, and the accessory subunits vah-19/Ac45 and vah-20/PRR.

It localises to the membrane. Proton-conducting pore forming subunit of the V0 complex of vacuolar(H+)-ATPase (V-ATPase), a multisubunit enzyme composed of a peripheral complex (V1) that hydrolyzes ATP and a membrane integral complex (V0) that translocates protons. V-ATPase is responsible for acidifying and maintaining the pH of intracellular compartments and in some cell types, is targeted to the plasma membrane, where it is responsible for acidifying the extracellular environment. Involved in necrotic cell death. Required along with other vacuolar ATPase components for the removal of protein aggregates which form in immature oocytes in the distal gonad. This removal occurs as the oocytes mature and move to the proximal gonad, is triggered by the introduction of sperm through mating and occurs before fertilization. The introduction of sperm triggers V-ATPase accumulation in proximal oocytes and induces lysosomal acidification which leads to engulfing of protein aggregates by lysosomes and subsequent clearance of the aggregates. Lysosomal acidification also leads to changes in mitochondrial morphology and function. Mitochondria in distal immature oocytes are fragmented, produce high levels of reactive oxygen species (ROS) and have high membrane potential, indicative of metabolic inactivity. In contrast, mitochondria in proximal mature oocytes are tubular with lower ROS levels and membrane potential, indicative of an active metabolic state required for aggregate mobilization before clearance. The chain is V-type proton ATPase 16 kDa proteolipid subunit c 2 from Caenorhabditis briggsae.